Here is a 367-residue protein sequence, read N- to C-terminus: Glutamate 5-kinase (367 aa).

ATP is bound at residue Lys-8. Substrate contacts are provided by Ser-49, Asp-136, and Asn-148. Residues 168–169 (TD) and 210–216 (TGGMVTK) contribute to the ATP site. Residues 275–353 (AGKLYLDEGA…REISTILGYA (79 aa)) enclose the PUA domain.

The protein belongs to the glutamate 5-kinase family.

It localises to the cytoplasm. The catalysed reaction is L-glutamate + ATP = L-glutamyl 5-phosphate + ADP. It participates in amino-acid biosynthesis; L-proline biosynthesis; L-glutamate 5-semialdehyde from L-glutamate: step 1/2. Its function is as follows. Catalyzes the transfer of a phosphate group to glutamate to form L-glutamate 5-phosphate. This is Glutamate 5-kinase from Nostoc punctiforme (strain ATCC 29133 / PCC 73102).